Here is a 51-residue protein sequence, read N- to C-terminus: Insulin (51 aa).

3 disulfides stabilise this stretch: Cys7–Cys37, Cys19–Cys50, and Cys36–Cys41.

Belongs to the insulin family. In terms of assembly, heterodimer of a B chain and an A chain linked by two disulfide bonds.

The protein resides in the secreted. Its function is as follows. Insulin decreases blood glucose concentration. It increases cell permeability to monosaccharides, amino acids and fatty acids. It accelerates glycolysis, the pentose phosphate cycle, and glycogen synthesis in liver. The protein is Insulin (INS) of Balaenoptera borealis (Sei whale).